Reading from the N-terminus, the 1058-residue chain is Isoleucine--tRNA ligase (1058 aa).

The 'HIGH' region signature appears at 48-58; the sequence is PYTTGHIHLGT. Positions 596–600 match the 'KMSKS' region motif; it reads KMSKS. Lys-599 serves as a coordination point for ATP.

Belongs to the class-I aminoacyl-tRNA synthetase family. IleS type 2 subfamily. Monomer. Zn(2+) serves as cofactor.

Its subcellular location is the cytoplasm. It catalyses the reaction tRNA(Ile) + L-isoleucine + ATP = L-isoleucyl-tRNA(Ile) + AMP + diphosphate. Catalyzes the attachment of isoleucine to tRNA(Ile). As IleRS can inadvertently accommodate and process structurally similar amino acids such as valine, to avoid such errors it has two additional distinct tRNA(Ile)-dependent editing activities. One activity is designated as 'pretransfer' editing and involves the hydrolysis of activated Val-AMP. The other activity is designated 'posttransfer' editing and involves deacylation of mischarged Val-tRNA(Ile). This chain is Isoleucine--tRNA ligase, found in Methanosarcina mazei (strain ATCC BAA-159 / DSM 3647 / Goe1 / Go1 / JCM 11833 / OCM 88) (Methanosarcina frisia).